Reading from the N-terminus, the 524-residue chain is Serine/threonine-protein phosphatase 2A 56 kDa regulatory subunit gamma isoform (524 aa).

Met1 bears the N-acetylmethionine mark. The Nuclear localization signal motif lies at 472–489 (RKTVSDEARQAQKDPKKE). A disordered region spans residues 476–524 (SDEARQAQKDPKKERPLARRKSELPQDPHTKKALEAHCRADELVPQDGR).

Belongs to the phosphatase 2A regulatory subunit B56 family. As to quaternary structure, PP2A consists of a common heterodimeric core enzyme, composed of PPP2CA a 36 kDa catalytic subunit (subunit C) and PPP2R1A a 65 kDa constant regulatory subunit (PR65 or subunit A), that associates with a variety of regulatory subunits. Proteins that associate with the core dimer include three families of regulatory subunits B (the R2/B/PR55/B55, R3/B''/PR72/PR130/PR59 and R5/B'/B56 families), the 48 kDa variable regulatory subunit, viral proteins, and cell signaling molecules. Interacts with SGO1. Interacts with SGO1; the interaction is direct. May interact with TP53. Interacts with IER3 and/or ERK kinases; regulates ERK dephosphorylation Interacts with CIP2A; this interaction stabilizes CIP2A. In terms of tissue distribution, highly expressed in testis, heart and spleen. Also found in brain and skeletal muscle.

Its subcellular location is the nucleus. The protein localises to the chromosome. It localises to the centromere. Its function is as follows. The B regulatory subunit might modulate substrate selectivity and catalytic activity, and might also direct the localization of the catalytic enzyme to a particular subcellular compartment. The PP2A-PPP2R5C holoenzyme may activate TP53 and play a role in DNA damage-induced inhibition of cell proliferation. PP2A-PPP2R5C may also regulate the ERK signaling pathway through ERK dephosphorylation. In Oryctolagus cuniculus (Rabbit), this protein is Serine/threonine-protein phosphatase 2A 56 kDa regulatory subunit gamma isoform (PPP2R5C).